Consider the following 501-residue polypeptide: Cystine/glutamate transporter (501 aa).

The Cytoplasmic segment spans residues 1–43 (MVRKPVVSTISKGGYLQGNVNGRLPSLGNKEPPGQEKVQLKRK). Ser26 is subject to Phosphoserine. The helical transmembrane segment at 44–64 (VTLLRGVSIIIGTIIGAGIFI) threads the bilayer. Topologically, residues 65-74 (SPKGVLQNTG) are extracellular. A helical membrane pass occupies residues 75-95 (SVGMSLTIWTVCGVLSLFGAL). At 96–101 (SYAELG) the chain is on the cytoplasmic side. Residues 102–116 (TTIKKSGGHYTYILE) lie within the membrane without spanning it. The Cytoplasmic portion of the chain corresponds to 117–130 (VFGPLPAFVRVWVE). The helical transmembrane segment at 131–150 (LLIIRPAATAVISLAFGRYI) threads the bilayer. Position 135 (Arg135) interacts with L-glutamate. Over 151 to 163 (LEPFFIQCEIPEL) the chain is Extracellular. Residues 164 to 179 (AIKLITAVGITVVMVL) traverse the membrane as a helical segment. Residues 180-193 (NSMSVSWSARIQIF) are Cytoplasmic-facing. A helical membrane pass occupies residues 194–210 (LTFCKLTAILIIIVPGV). Over 211-234 (MQLIKGQTQNFKDAFSGRDSSITR) the chain is Extracellular. Residues 235-255 (LPLAFYYGMYAYAGWFYLNFV) traverse the membrane as a helical segment. Tyr244 lines the L-glutamate pocket. The Cytoplasmic segment spans residues 256-265 (TEEVENPEKT). Residues 266–286 (IPLAICISMAIVTIGYVLTNV) form a helical membrane-spanning segment. Residues 287–317 (AYFTTINAEELLLSNAVAVTFSERLLGNFSL) are Extracellular-facing. The N-linked (GlcNAc...) asparagine glycan is linked to Asn314. A helical transmembrane segment spans residues 318 to 338 (AVPIFVALSCFGSMNGGVFAV). Topologically, residues 339-364 (SRLFYVASREGHLPEILSMIHVRKHT) are cytoplasmic. Residues 365-385 (PLPAVIVLHPLTMIMLFSGDL) traverse the membrane as a helical segment. At 386–387 (DS) the chain is on the extracellular side. Residues 388–408 (LLNFLSFARWLFIGLAVAGLI) traverse the membrane as a helical segment. The Cytoplasmic portion of the chain corresponds to 409–422 (YLRYKCPDMHRPFK). A helical membrane pass occupies residues 423–443 (VPLFIPALFSFTCLFMVALSL). Residues 444–449 (YSDPFS) lie on the Extracellular side of the membrane. Residues 450–470 (TGIGFVITLTGVPAYYLFIIW) form a helical membrane-spanning segment. The Cytoplasmic segment spans residues 471 to 501 (DKKPRWFRIMSEKITRTLQIILEVVPEEDKL).

The protein belongs to the amino acid-polyamine-organocation (APC) superfamily. L-type amino acid transporter (LAT) (TC 2.A.3.8) family. Disulfide-linked heterodimer with the amino acid transport protein SLC3A2/4F2hc; this interaction mediates cell membrane localization. In terms of processing, ubiquitinated by TRIM26; leading to proteasomal degradation. As to expression, expressed in term placenta and primary term cytotrophoblast. Expressed mainly in the brain, but also in pancreas.

It localises to the cell membrane. The protein localises to the cell projection. The protein resides in the microvillus membrane. It catalyses the reaction L-cystine(out) + L-glutamate(in) = L-cystine(in) + L-glutamate(out). The enzyme catalyses an L-alpha-amino acid(in) + L-kynurenine(out) = an L-alpha-amino acid(out) + L-kynurenine(in). It carries out the reaction N-acetyl-L-cysteine(out) + L-glutamate(in) = N-acetyl-L-cysteine(in) + L-glutamate(out). With respect to regulation, inhibited by erastin and sulfasalazine. Inhibited by (S)-lactate. Inactivated by p-chloromercuribenzoic acid and p-chloromercuribenzenesulfonic acid. In terms of biological role, heterodimer with SLC3A2, that functions as an antiporter by mediating the exchange of extracellular anionic L-cystine and intracellular L-glutamate across the cellular plasma membrane. Provides L-cystine for the maintenance of the redox balance between extracellular L-cystine and L-cysteine and for the maintenance of the intracellular levels of glutathione that is essential for cells protection from oxidative stress. The transport is sodium-independent, electroneutral with a stoichiometry of 1:1, and is drove by the high intracellular concentration of L-glutamate and the intracellular reduction of L-cystine. In addition, mediates the import of L-kynurenine leading to anti-ferroptotic signaling propagation required to maintain L-cystine and glutathione homeostasis. Moreover, mediates N-acetyl-L-cysteine uptake into the placenta leading to subsequently down-regulation of pathways associated with oxidative stress, inflammation and apoptosis. In vitro can also transport L-aspartate. May participate in astrocyte and meningeal cell proliferation during development and can provide neuroprotection by promoting glutathione synthesis and delivery from non-neuronal cells such as astrocytes and meningeal cells to immature neurons. Controls the production of pheomelanin pigment directly. This chain is Cystine/glutamate transporter, found in Homo sapiens (Human).